An 892-amino-acid polypeptide reads, in one-letter code: Chromodomain-helicase-DNA-binding protein 3 (892 aa).

The segment covering 1 to 20 (MSSKRGADPDWKTPGKASKD) has biased composition (basic and acidic residues). The disordered stretch occupies residues 1 to 29 (MSSKRGADPDWKTPGKASKDKRPKTNAKK). The PHD-type zinc-finger motif lies at 35–82 (EEYCKVCSDGGDLLCCDSCPSVYHRTCLSPPLKSIPKGDWICPRCIPL). 2 consecutive Chromo domains span residues 84–156 (GKAE…PSLE) and 179–240 (LLVQ…GRQR). The Helicase ATP-binding domain occupies 279-458 (RYSWGQGIPT…FHLLNFLSSG (180 aa)). 292-299 (DEMGLGKT) is a binding site for ATP. Residues 409-412 (DEAH) carry the DEAH box motif. Residues 590-739 (LLSKMLKQLK…LTHLVVRPGM (150 aa)) enclose the Helicase C-terminal domain. The interval 839-892 (SQPKLPKKQKKQSQQSQVDVESIMGKGKRIRKEIDYSNQYPSPNRATPSSIVLM) is disordered. Residues 874-892 (YSNQYPSPNRATPSSIVLM) are compositionally biased toward polar residues.

Belongs to the SNF2/RAD54 helicase family. In terms of assembly, monomer.

Its subcellular location is the nucleus. It localises to the chromosome. It carries out the reaction ATP + H2O = ADP + phosphate + H(+). Its activity is regulated as follows. ATPase activity is stimulated by binding to DNA or nucleosomes, but is strongly activated by nucleosomes. In terms of biological role, ATP-dependent chromatin-remodeling factor which acts in nucleosome-remodeling by catalyzing ATP-dependent nucleosome mobilization. Likely to be involved in the regulation of transcription. The polypeptide is Chromodomain-helicase-DNA-binding protein 3 (Drosophila melanogaster (Fruit fly)).